Consider the following 64-residue polypeptide: Bacteriocin plantaricin ASM1 (64 aa).

Residues 1 to 21 (MSKLVKTLTVDEISKIQTNGG) form the signal peptide. The segment at residues 61-64 (SYHC) is a cross-link (lanthionine (Ser-Cys)).

In terms of processing, contains 2 disulfide bonds.

The protein resides in the secreted. Functionally, bacteriocin with a narrow antibacterial spectrum. Antibacterial activity against the Gram-positive bacteria L.plantarun, L.pentosus, L.curvatus, L.lindneri, L.mesenteroides and E.faecilis. Lacks antibacterial activity against the Gram-positive bacteria L.brevis, L.sakei, L.lactis, P.acidilactici, B.subtilis, B.cereus, L.monocytogenes and S.aureus, and against the Gram-negative bacteria E.coli and S.typhimurium. The sequence is that of Bacteriocin plantaricin ASM1 from Lactiplantibacillus plantarum (Lactobacillus plantarum).